A 600-amino-acid chain; its full sequence is Aspartate--tRNA(Asp/Asn) ligase (600 aa).

Residue E175 coordinates L-aspartate. The aspartate stretch occupies residues 199–202 (QLFK). R221 lines the L-aspartate pocket. Residues 221 to 223 (RDE) and Q230 contribute to the ATP site. An L-aspartate-binding site is contributed by H453. E487 contributes to the ATP binding site. R494 provides a ligand contact to L-aspartate. An ATP-binding site is contributed by 539 to 542 (GWDR). A disordered region spans residues 578-600 (AAQRKESGIDFKPKKGPQGQKEK). Residues 580 to 590 (QRKESGIDFKP) show a composition bias toward basic and acidic residues.

This sequence belongs to the class-II aminoacyl-tRNA synthetase family. Type 1 subfamily. In terms of assembly, homodimer.

The protein localises to the cytoplasm. The catalysed reaction is tRNA(Asx) + L-aspartate + ATP = L-aspartyl-tRNA(Asx) + AMP + diphosphate. Aspartyl-tRNA synthetase with relaxed tRNA specificity since it is able to aspartylate not only its cognate tRNA(Asp) but also tRNA(Asn). Reaction proceeds in two steps: L-aspartate is first activated by ATP to form Asp-AMP and then transferred to the acceptor end of tRNA(Asp/Asn). The sequence is that of Aspartate--tRNA(Asp/Asn) ligase from Corynebacterium jeikeium (strain K411).